The primary structure comprises 482 residues: Ubiquitin carboxyl-terminal hydrolase 6 (482 aa).

The 76-residue stretch at 2–77 (PTVSVKWQKK…LMMMGTADEI (76 aa)) folds into the Ubiquitin-like domain. The 375-residue stretch at 104-478 (AGLVNLGNTC…MAYITMYKAR (375 aa)) folds into the USP domain. The active-site Nucleophile is Cys113. The calmodulin-binding stretch occupies residues 172–191 (SQFWMVLRKKYPQFSQLQNG). 2 stretches are compositionally biased toward basic and acidic residues: residues 350–361 (PRQKLREEEGKK) and 371–381 (GSKDSDVKMTD). A disordered region spans residues 350–407 (PRQKLREEEGKKLGLQTSAKSGSKDSDVKMTDAEASANGSGESSTVNPQEGTSSEKET). Over residues 382 to 393 (AEASANGSGESS) the composition is skewed to low complexity. Catalysis depends on His430, which acts as the Proton acceptor.

Belongs to the peptidase C19 family. Interacts with calmodulin (CaM).

It carries out the reaction Thiol-dependent hydrolysis of ester, thioester, amide, peptide and isopeptide bonds formed by the C-terminal Gly of ubiquitin (a 76-residue protein attached to proteins as an intracellular targeting signal).. Functionally, recognizes and hydrolyzes the peptide bond at the C-terminal Gly of ubiquitin. Involved in the processing of poly-ubiquitin precursors as well as that of ubiquitinated proteins. The chain is Ubiquitin carboxyl-terminal hydrolase 6 (UBP6) from Arabidopsis thaliana (Mouse-ear cress).